The primary structure comprises 70 residues: MKTGIHPNYAEITATCTCGNIIKVNSTAGKNLHLDVCGACHPFYTGTQKVVDTGGRIDKFNKRFGMLGKK.

Positions 16, 18, 37, and 40 each coordinate Zn(2+).

This sequence belongs to the bacterial ribosomal protein bL31 family. Type A subfamily. As to quaternary structure, part of the 50S ribosomal subunit. It depends on Zn(2+) as a cofactor.

Binds the 23S rRNA. The polypeptide is Large ribosomal subunit protein bL31 (Shewanella frigidimarina (strain NCIMB 400)).